The chain runs to 202 residues: Probable nicotinate-nucleotide adenylyltransferase (202 aa).

The protein belongs to the NadD family.

It catalyses the reaction nicotinate beta-D-ribonucleotide + ATP + H(+) = deamido-NAD(+) + diphosphate. It participates in cofactor biosynthesis; NAD(+) biosynthesis; deamido-NAD(+) from nicotinate D-ribonucleotide: step 1/1. Its function is as follows. Catalyzes the reversible adenylation of nicotinate mononucleotide (NaMN) to nicotinic acid adenine dinucleotide (NaAD). The protein is Probable nicotinate-nucleotide adenylyltransferase of Clostridium perfringens (strain ATCC 13124 / DSM 756 / JCM 1290 / NCIMB 6125 / NCTC 8237 / Type A).